The following is a 188-amino-acid chain: Elongation factor P (188 aa).

The disordered stretch occupies residues 139–163 (PVTKGQTASSSYKPATLSNGVRTQV). Positions 142 to 160 (KGQTASSSYKPATLSNGVR) are enriched in polar residues.

Belongs to the elongation factor P family.

It is found in the cytoplasm. Its pathway is protein biosynthesis; polypeptide chain elongation. Its function is as follows. Involved in peptide bond synthesis. Stimulates efficient translation and peptide-bond synthesis on native or reconstituted 70S ribosomes in vitro. Probably functions indirectly by altering the affinity of the ribosome for aminoacyl-tRNA, thus increasing their reactivity as acceptors for peptidyl transferase. This chain is Elongation factor P, found in Methylobacterium nodulans (strain LMG 21967 / CNCM I-2342 / ORS 2060).